A 60-amino-acid polypeptide reads, in one-letter code: Large ribosomal subunit protein bL32 (60 aa).

The protein belongs to the bacterial ribosomal protein bL32 family.

This is Large ribosomal subunit protein bL32 from Moorella thermoacetica (strain ATCC 39073 / JCM 9320).